The chain runs to 511 residues: Cytochrome P450 4B1 (511 aa).

2 residues coordinate heme: E315 and C453.

Belongs to the cytochrome P450 family. Heme serves as cofactor.

It is found in the endoplasmic reticulum membrane. The protein resides in the microsome membrane. The catalysed reaction is an organic molecule + reduced [NADPH--hemoprotein reductase] + O2 = an alcohol + oxidized [NADPH--hemoprotein reductase] + H2O + H(+). Cytochromes P450 are a group of heme-thiolate monooxygenases. In liver microsomes, this enzyme is involved in an NADPH-dependent electron transport pathway. It oxidizes a variety of structurally unrelated compounds, including steroids, fatty acids, and xenobiotics. In Rattus norvegicus (Rat), this protein is Cytochrome P450 4B1 (Cyp4b1).